A 180-amino-acid polypeptide reads, in one-letter code: Stathmin-3 (180 aa).

Residues Cys-22 and Cys-24 are each lipidated (S-palmitoyl cysteine). Positions 38–180 (GDMEVKQLDK…NKEQREEMSG (143 aa)) constitute an SLD domain. A phosphoserine mark is found at Ser-50, Ser-60, Ser-65, Ser-68, Ser-72, Ser-73, and Ser-81. Positions 58–82 (LKSPSDLSPESPMLSSPPKRKDTSL) are disordered. Over residues 60–74 (SPSDLSPESPMLSSP) the composition is skewed to low complexity. Residues 76-179 (KRKDTSLEEL…RNKEQREEMS (104 aa)) are a coiled coil.

It belongs to the stathmin family. Interacts with STAT3. Interacts with CLU (secreted form); this interaction may act as an important modulator during neuronal differentiation. N-terminal palmitoylation promotes specific anchoring to the cytosolic leaflet of Golgi membranes and subsequent vesicular trafficking along dendrites and axons. Neuronal Stathmins are substrates for palmitoyltransferases ZDHHC3, ZDHHC7 and ZDHHC15.

The protein resides in the golgi apparatus. It is found in the cell projection. Its subcellular location is the growth cone. It localises to the axon. The protein localises to the cytoplasm. The protein resides in the cytosol. Functionally, exhibits microtubule-destabilizing activity, which is antagonized by STAT3. This Bos taurus (Bovine) protein is Stathmin-3 (STMN3).